The following is a 338-amino-acid chain: tRNA N6-adenosine threonylcarbamoyltransferase (338 aa).

2 residues coordinate Fe cation: His-112 and His-116. Residues 135-139 (LVSGG), Asp-168, Gly-181, and Asn-273 contribute to the substrate site. Asp-301 is a Fe cation binding site.

Belongs to the KAE1 / TsaD family. Requires Fe(2+) as cofactor.

The protein resides in the cytoplasm. The catalysed reaction is L-threonylcarbamoyladenylate + adenosine(37) in tRNA = N(6)-L-threonylcarbamoyladenosine(37) in tRNA + AMP + H(+). Functionally, required for the formation of a threonylcarbamoyl group on adenosine at position 37 (t(6)A37) in tRNAs that read codons beginning with adenine. Is involved in the transfer of the threonylcarbamoyl moiety of threonylcarbamoyl-AMP (TC-AMP) to the N6 group of A37, together with TsaE and TsaB. TsaD likely plays a direct catalytic role in this reaction. This Buchnera aphidicola subsp. Baizongia pistaciae (strain Bp) protein is tRNA N6-adenosine threonylcarbamoyltransferase.